We begin with the raw amino-acid sequence, 672 residues long: Negative growth regulatory protein NGR1 (672 aa).

Position 1 is an N-acetylmethionine (Met1). 2 stretches are compositionally biased toward polar residues: residues 1-13 and 23-32; these read MMSN…QRQE and SSTVETSTEP. Disordered stretches follow at residues 1-40 and 77-102; these read MMSN…WMGD and SSTS…NSTD. Met2 is modified (N-acetylserine). 3 consecutive RRM domains span residues 36-159, 192-271, and 360-432; these read LWMG…YSPT, FSLF…YATP, and TTVF…WGRP. Low complexity predominate over residues 77 to 96; it reads SSTSSSNNNTSEENAENQQS. Ser524 is subject to Phosphoserine. Residues 640-672 are disordered; the sequence is LNIAPNSNNSKSSIMNKHPNRNNVPPIHPSLLH. The segment covering 645–656 has biased composition (low complexity); sequence NSNNSKSSIMNK.

Functionally, may be an RNA-binding protein involved in control of an RNA processing pathway that influences the regulation of cell growth in early log phase. Can bind to RNA and single-stranded DNA but not double-stranded DNA. The protein is Negative growth regulatory protein NGR1 (NGR1) of Saccharomyces cerevisiae (strain ATCC 204508 / S288c) (Baker's yeast).